Consider the following 701-residue polypeptide: Polyribonucleotide nucleotidyltransferase (701 aa).

Mg(2+)-binding residues include Asp-487 and Asp-493. Positions Pro-554 to Val-613 constitute a KH domain. The S1 motif domain occupies Gly-623–Lys-691.

Belongs to the polyribonucleotide nucleotidyltransferase family. Component of the RNA degradosome, which is a multiprotein complex involved in RNA processing and mRNA degradation. Mg(2+) serves as cofactor.

The protein resides in the cytoplasm. It catalyses the reaction RNA(n+1) + phosphate = RNA(n) + a ribonucleoside 5'-diphosphate. In terms of biological role, involved in mRNA degradation. Catalyzes the phosphorolysis of single-stranded polyribonucleotides processively in the 3'- to 5'-direction. The polypeptide is Polyribonucleotide nucleotidyltransferase (Pseudomonas savastanoi pv. phaseolicola (strain 1448A / Race 6) (Pseudomonas syringae pv. phaseolicola (strain 1448A / Race 6))).